We begin with the raw amino-acid sequence, 552 residues long: Hyaluronan synthase 2 (552 aa).

Topologically, residues 1–11 (MHCERFLCVLR) are cytoplasmic. The chain crosses the membrane as a helical span at residues 12–32 (IIGTTLFGVSLLLGITAAYIV). Topologically, residues 33-45 (GYQFIQTDNYYFS) are extracellular. A helical membrane pass occupies residues 46 to 66 (FGLYGAFLASHLIIQSLFAFL). The Cytoplasmic segment spans residues 67–374 (EHRKMKKSLE…NAMWFHKHHL (308 aa)). Thr110 carries the post-translational modification Phosphothreonine. Residue Lys190 forms a Glycyl lysine isopeptide (Lys-Gly) (interchain with G-Cter in ubiquitin) linkage. O-linked (GlcNAc) serine glycosylation is present at Ser221. Position 328 is a phosphothreonine (Thr328). Residues 375 to 395 (WMTYEAVITGFFPFFLIATVI) form a helical membrane-spanning segment. At 396–402 (QLFYRGK) the chain is on the extracellular side. A helical transmembrane segment spans residues 403–423 (IWNILLFLLTVQLVGLIKSSF). Residues 424-429 (ASCLRG) lie on the Cytoplasmic side of the membrane. The chain crosses the membrane as a helical span at residues 430 to 450 (NIVMVFMSLYSVLYMSSLLPA). Over 451-475 (KMFAIATINKAGWGTSGRKTIVVNF) the chain is Extracellular. The chain crosses the membrane as a helical span at residues 476 to 496 (IGLIPVSVWFTILLGGVIFTI). Topologically, residues 497–510 (YKESKKPFSESKQT) are cytoplasmic. Residues 511-531 (VLIVGTLIYACYWVVLLTLYV) form a helical membrane-spanning segment. Residues 532–552 (VLINKCGRRKKGQQYDMVLDV) lie on the Extracellular side of the membrane.

Belongs to the NodC/HAS family. Homodimer; dimerization promotes enzymatic activity. Forms heterodimer with HAS3. Forms heterodimer with HAS1. The cofactor is Mg(2+). Phosphorylation at Thr-328 is essential for hyaluronan synthase activity. Post-translationally, O-GlcNAcylation at Ser-221 increases the stability of HAS2 and plasma membrane localization. In terms of processing, ubiquitination at Lys-190; this ubiquitination is essential for hyaluronan synthase activity and homo- or hetero-oligomerization. Can also be poly-ubiquitinated. Deubiquitinated by USP17L22/USP17 and USP4. USP17L22/USP17 efficiently removes 'Lys-63'- and 'Lys-48'-linked polyubiquitin chains, whereas USP4 preferentially removes monoubiquitination and, partially, both 'Lys-63'- and 'Lys-48'-linked polyubiquitin chain.

The protein localises to the cell membrane. Its subcellular location is the endoplasmic reticulum membrane. It is found in the vesicle. It localises to the golgi apparatus membrane. The protein resides in the lysosome. The enzyme catalyses [hyaluronan](n) + UDP-N-acetyl-alpha-D-glucosamine = N-acetyl-beta-D-glucosaminyl-(1-&gt;4)-[hyaluronan](n) + UDP + H(+). It carries out the reaction N-acetyl-beta-D-glucosaminyl-(1-&gt;4)-[hyaluronan](n) + UDP-alpha-D-glucuronate = [hyaluronan](n+1) + UDP + H(+). Its pathway is glycan biosynthesis; hyaluronan biosynthesis. In terms of biological role, catalyzes the addition of GlcNAc or GlcUA monosaccharides to the nascent hyaluronan polymer. Therefore, it is essential to hyaluronan synthesis a major component of most extracellular matrices that has a structural role in tissues architectures and regulates cell adhesion, migration and differentiation. This is one of three isoenzymes responsible for cellular hyaluronan synthesis and it is particularly responsible for the synthesis of high molecular mass hyaluronan. The chain is Hyaluronan synthase 2 (Has2) from Rattus norvegicus (Rat).